The chain runs to 655 residues: MVNEPRGNGSPGPRWEGSSSGSESSRTSSRCSTPGLDPERCERLREKMKRKMDSGDKWFSLEFFPPRTAQGAVNLISRFDRMGAGGPLFVDVTWHPAGDPGSDKETSSMVIASTAVNYCGLETILHMTCCHQSREEITGHLNKAKQLGLKNILALRGDPIGDQWEEEEGGFNYATDLVKHIRNEFGDYFDVCVAGYPKGHPEGESFEADLKHLKEKVAAGADFIITQLFFEAETFFRFVKACSEIGITCPVLPGIFPIQGYHSLRQLVKLSKLEVPQQIKDVIEPIKDNDAAIRNYGIEQAVSLCQELLASGLVPGLHFYTLNREVATIEVLKRLGLWIEDPRRPLPWALSAHPKRRVEDVRPIFWASRPKSYIYRTQEWDEFPNGRWGNSSSPAFGELKDYYLFYLKSKSPKEELLKMWGEELTSEESVFQVFAHHLSGEPNQNGYKVTCLPWNDEPLAAETSLMKEELLRVNRRGILTINSQPNINGKPSSDPIVGWGPSGGYVFQKAYLEFFTSRETVEALLQVLKKYELRVNYHIVDVKGENITNAPELQPNAVTWGIFPGREIIQPTVVDPVSFMFWKDEAFALWIEQWGKLYEEESPSRMIIQYIHDNYFLVNLVDNEFPLDNCLWQVVEDTFELLSRPPQDKRETEAL.

The tract at residues 1–39 is disordered; the sequence is MVNEPRGNGSPGPRWEGSSSGSESSRTSSRCSTPGLDPE. Phosphoserine occurs at positions 10, 18, 19, 20, 22, 24, 25, 28, and 29. Residues 11–35 show a composition bias toward low complexity; it reads PGPRWEGSSSGSESSRTSSRCSTPG. Threonine 33 is modified (phosphothreonine). Glutamate 62 functions as the Proton donor/acceptor in the catalytic mechanism. NAD(+)-binding positions include 62–67 and 93–94; these read EFFPPR and TW. Threonine 93 is modified (phosphothreonine). 93 to 94 is an FAD binding site; the sequence is TW. At serine 102 the chain carries Phosphoserine. FAD contacts are provided by residues histidine 126, 156 to 158, 173 to 174, tyrosine 196, 200 to 203, aspartate 209, and lysine 216; these read RGD, YA, and HPEG. Aspartate 158 is a substrate binding site. Substrate contacts are provided by glutamine 227, tyrosine 320, and arginine 324. A Phosphoserine modification is found at serine 393. The residue at position 450 (threonine 450) is a Phosphothreonine. S-adenosyl-L-methionine contacts are provided by residues asparagine 455, 460–463, 480–484, threonine 559, and threonine 572; these read AAET and TINSQ.

Belongs to the methylenetetrahydrofolate reductase family. In terms of assembly, homodimer. FAD is required as a cofactor. In terms of processing, phosphorylation of an N-terminal serine-rich phosphorylation region increases sensitivity to S-adenosylmethionine and inhibition.

It carries out the reaction (6S)-5-methyl-5,6,7,8-tetrahydrofolate + NADP(+) = (6R)-5,10-methylene-5,6,7,8-tetrahydrofolate + NADPH + H(+). It functions in the pathway one-carbon metabolism; tetrahydrofolate interconversion. Its activity is regulated as follows. Allosterically regulated by S-adenosylmethionine (SAM). Functionally, catalyzes the conversion of 5,10-methylenetetrahydrofolate to 5-methyltetrahydrofolate, a cosubstrate for homocysteine remethylation to methionine. Represents a key regulatory connection between the folate and methionine cycles. In Bos taurus (Bovine), this protein is Methylenetetrahydrofolate reductase (NADPH) (MTHFR).